Reading from the N-terminus, the 86-residue chain is Small ribosomal subunit protein bS20 (86 aa).

It belongs to the bacterial ribosomal protein bS20 family.

Binds directly to 16S ribosomal RNA. The chain is Small ribosomal subunit protein bS20 from Pseudarthrobacter chlorophenolicus (strain ATCC 700700 / DSM 12829 / CIP 107037 / JCM 12360 / KCTC 9906 / NCIMB 13794 / A6) (Arthrobacter chlorophenolicus).